A 212-amino-acid chain; its full sequence is N-(5'-phosphoribosyl)anthranilate isomerase (212 aa).

It belongs to the TrpF family.

The enzyme catalyses N-(5-phospho-beta-D-ribosyl)anthranilate = 1-(2-carboxyphenylamino)-1-deoxy-D-ribulose 5-phosphate. It functions in the pathway amino-acid biosynthesis; L-tryptophan biosynthesis; L-tryptophan from chorismate: step 3/5. The protein is N-(5'-phosphoribosyl)anthranilate isomerase of Cereibacter sphaeroides (strain ATCC 17029 / ATH 2.4.9) (Rhodobacter sphaeroides).